The following is a 134-amino-acid chain: Small ribosomal subunit protein uS8 (134 aa).

It belongs to the universal ribosomal protein uS8 family. Part of the 30S ribosomal subunit. Contacts proteins S5 and S12.

One of the primary rRNA binding proteins, it binds directly to 16S rRNA central domain where it helps coordinate assembly of the platform of the 30S subunit. The polypeptide is Small ribosomal subunit protein uS8 (Synechococcus sp. (strain JA-3-3Ab) (Cyanobacteria bacterium Yellowstone A-Prime)).